Reading from the N-terminus, the 168-residue chain is Phosphopantetheine adenylyltransferase (168 aa).

Position 14 (Thr14) interacts with substrate. ATP is bound by residues Thr14 to Phe15 and His22. Substrate is bound by residues Lys46, Leu78, and Arg92. ATP is bound by residues Gly93–Arg95, Glu103, and Tyr128–Ser134.

Belongs to the bacterial CoaD family. Homohexamer. Mg(2+) serves as cofactor.

The protein resides in the cytoplasm. It carries out the reaction (R)-4'-phosphopantetheine + ATP + H(+) = 3'-dephospho-CoA + diphosphate. The protein operates within cofactor biosynthesis; coenzyme A biosynthesis; CoA from (R)-pantothenate: step 4/5. Functionally, reversibly transfers an adenylyl group from ATP to 4'-phosphopantetheine, yielding dephospho-CoA (dPCoA) and pyrophosphate. This chain is Phosphopantetheine adenylyltransferase, found in Xanthomonas oryzae pv. oryzae (strain MAFF 311018).